The following is a 307-amino-acid chain: MTVTAAMVKELREKTGAGMMDCKKALAETNGDMEAAIDWLRAKGIAKADKKSGRTAAEGLIGIASAGAKAVVVEINSETDFVARNDAFQELVRGVANVALGTDGSVAAVSKATYPATGKSVEDTIKDAIATIGENMTLRRSAMLEVEDGVVATYVHNAAGEGIGKLGVLVALKSSGDKEALNAIGRQVAMHVAATNPLAVRSSEIDPAVAERERNVFIEQSRASGKPDNIIEKMVDGRMRKFFEEVALLSQAFVMNPDQTVEAAIKEAEKSVGAPIEVAGIARLLLGEGVEKEESDFAAEVAAAAKG.

Residues 79–82 (TDFV) form an involved in Mg(2+) ion dislocation from EF-Tu region.

This sequence belongs to the EF-Ts family.

The protein localises to the cytoplasm. Associates with the EF-Tu.GDP complex and induces the exchange of GDP to GTP. It remains bound to the aminoacyl-tRNA.EF-Tu.GTP complex up to the GTP hydrolysis stage on the ribosome. The polypeptide is Elongation factor Ts (Sinorhizobium medicae (strain WSM419) (Ensifer medicae)).